Here is a 447-residue protein sequence, read N- to C-terminus: Protein odr-4 homolog (447 aa).

The next 2 helical transmembrane spans lie at 82-102 and 425-445; these read MLPGGLVVLGIFIITTLELAD and IGVIAALAVAVLAAGISFHYF.

The protein belongs to the ODR-4 family. Ubiquitously expressed.

It localises to the membrane. Functionally, may play a role in the trafficking of a subset of G-protein coupled receptors. The chain is Protein odr-4 homolog (Odr4) from Mus musculus (Mouse).